We begin with the raw amino-acid sequence, 612 residues long: Elongation factor 4 (612 aa).

The 183-residue stretch at 11–193 (KHIRNFSIVA…RIVTDISAPT (183 aa)) folds into the tr-type G domain. GTP contacts are provided by residues 23–28 (DHGKST) and 140–143 (NKID).

It belongs to the TRAFAC class translation factor GTPase superfamily. Classic translation factor GTPase family. LepA subfamily.

The protein resides in the cell membrane. The catalysed reaction is GTP + H2O = GDP + phosphate + H(+). Functionally, required for accurate and efficient protein synthesis under certain stress conditions. May act as a fidelity factor of the translation reaction, by catalyzing a one-codon backward translocation of tRNAs on improperly translocated ribosomes. Back-translocation proceeds from a post-translocation (POST) complex to a pre-translocation (PRE) complex, thus giving elongation factor G a second chance to translocate the tRNAs correctly. Binds to ribosomes in a GTP-dependent manner. In Lactobacillus delbrueckii subsp. bulgaricus (strain ATCC 11842 / DSM 20081 / BCRC 10696 / JCM 1002 / NBRC 13953 / NCIMB 11778 / NCTC 12712 / WDCM 00102 / Lb 14), this protein is Elongation factor 4.